The chain runs to 309 residues: Glutaminase (309 aa).

S65, N117, E162, N169, Y193, Y245, and V263 together coordinate substrate.

This sequence belongs to the glutaminase family. Homotetramer.

The enzyme catalyses L-glutamine + H2O = L-glutamate + NH4(+). This Bacillus mycoides (strain KBAB4) (Bacillus weihenstephanensis) protein is Glutaminase.